Here is a 371-residue protein sequence, read N- to C-terminus: Protein NDRG2 (371 aa).

A disordered region spans residues Met-1–Pro-21. The residue at position 2 (Ala-2) is an N-acetylalanine. Thr-20 is modified (phosphothreonine). Ser-326 and Ser-328 each carry phosphoserine. A Phosphothreonine modification is found at Thr-330. Phosphoserine is present on Ser-332. Residue Thr-334 is modified to Phosphothreonine. The tract at residues Thr-334–Cys-371 is disordered. Residues Ser-335, Ser-338, and Ser-344 each carry the phosphoserine modification. Over residues Arg-347–Gly-361 the composition is skewed to low complexity. Thr-348 carries the phosphothreonine modification. A phosphoserine mark is found at Ser-350, Ser-352, Ser-353, and Ser-355. At Thr-357 the chain carries Phosphothreonine. Ser-370 is subject to Phosphoserine.

The protein belongs to the NDRG family. As to quaternary structure, interacts with CTNNB1. In terms of tissue distribution, highly expressed in brain, heart, skeletal muscle and salivary gland, and moderately in kidney and liver. Expressed in dendritic cells, but not in other blood cells. Expression levels are low in pancreatic and liver cancer tissues; absent in meningioma. Expressed in low-grade gliomas but present at low levels in glioblastoma. Isoform 1 and isoform 2 are present in brain neurons and up-regulated in Alzheimer disease (at protein level).

The protein localises to the cytoplasm. Its subcellular location is the perinuclear region. The protein resides in the cell projection. It localises to the growth cone. Its function is as follows. Contributes to the regulation of the Wnt signaling pathway. Down-regulates CTNNB1-mediated transcriptional activation of target genes, such as CCND1, and may thereby act as tumor suppressor. May be involved in dendritic cell and neuron differentiation. The chain is Protein NDRG2 (NDRG2) from Homo sapiens (Human).